The following is a 189-amino-acid chain: HGPRTase-like protein 2 (189 aa).

Belongs to the purine/pyrimidine phosphoribosyltransferase family. Archaeal HPRT subfamily.

Functionally, may catalyze a purine salvage reaction, the substrate is unknown. This chain is HGPRTase-like protein 2, found in Haloarcula marismortui (strain ATCC 43049 / DSM 3752 / JCM 8966 / VKM B-1809) (Halobacterium marismortui).